Consider the following 476-residue polypeptide: Argininosuccinate lyase (476 aa).

Belongs to the lyase 1 family. Argininosuccinate lyase subfamily.

The protein resides in the cytoplasm. The enzyme catalyses 2-(N(omega)-L-arginino)succinate = fumarate + L-arginine. Its pathway is amino-acid biosynthesis; L-arginine biosynthesis; L-arginine from L-ornithine and carbamoyl phosphate: step 3/3. The protein is Argininosuccinate lyase of Acaryochloris marina (strain MBIC 11017).